The primary structure comprises 373 residues: Arfaptin-1 (373 aa).

Residues 1–47 are disordered; the sequence is MAQESPKNSAAEIPVTSNGEVDDSREHSFNRDLKHSLPSGLGLSETQ. At alanine 2 the chain carries N-acetylalanine. Phosphoserine occurs at positions 5, 28, 36, 39, 69, 79, and 132. A compositionally biased stretch (basic and acidic residues) spans 22–35; that stretch reads DDSREHSFNRDLKH. Residues 153–353 form the AH domain; it reads TVDLELEAQI…NQKQLEQTLK (201 aa). Position 361 is a phosphothreonine (threonine 361).

As to quaternary structure, forms homodimers or heterodimers with ARFIP2. Interacts with non-myristoylated GTP-bound ARF3, but not to GDP-bound ARF3. Interacts with ARF1. Binds with lower affinity to ARF5 and with very little affinity to ARF6. Interacts with ARL1. Interacts with ATG9A. Phosphorylated by PRKD1; phosphorylation delocalizes ARFIP1 from the Golgi and disrupts its ability to inhibit the activity of ADP-ribosylation factor, an important component of the vesicle scission machinery. Ubiquitously expressed. Higher levels in liver, pancreas, placenta, skeletal muscle and heart.

The protein localises to the golgi apparatus. It is found in the trans-Golgi network membrane. Functionally, plays a role in controlling biogenesis of secretory granules at the trans-Golgi network. Mechanistically, binds ARF-GTP at the neck of a growing secretory granule precursor and forms a protective scaffold. Once the granule precursor has been completely loaded, active PRKD1 phosphorylates ARFIP1 and releases it from ARFs. In turn, ARFs induce fission. Through this mechanism, ensures proper secretory granule formation at the Golgi of pancreatic beta cells. The sequence is that of Arfaptin-1 from Homo sapiens (Human).